Here is a 43-residue protein sequence, read N- to C-terminus: Protein PsbN (43 aa).

A helical membrane pass occupies residues 7 to 27 (IAIFISGLLVSFTGYALYTAF).

Belongs to the PsbN family.

The protein localises to the plastid. Its subcellular location is the chloroplast thylakoid membrane. Functionally, may play a role in photosystem I and II biogenesis. This is Protein PsbN from Suaeda maritima (Annual sea blite).